The primary structure comprises 113 residues: Protein ORF3 (113 aa).

Hydrophobic stretches follow at residues 1-21 (MGSP…CLCC) and 32-52 (AVVG…GLIL). The tract at residues 27–67 (ASRLAAVVGGAAAVPAVVSGVTGLILSPSPSPIFIQPTPSP) is interaction with host HPX. Positions 47–71 (VTGLILSPSPSPIFIQPTPSPPMSF) are interaction with the capsid protein. S70 carries the phosphoserine; by host modification. The interval 71 to 113 (FHNPGLELALDSRPAPLXPLGVTSPSAPPLPPVVDLPQLGLRR) is homodimerization, and interaction with host AMBP/bikunin. The tract at residues 90–113 (LGVTSPSAPPLPPVVDLPQLGLRR) is disordered. The segment at 94 to 103 (SPSAPPLPPV) is interaction with host SRC, HCK, FYN, PIK3R3 and GRB2. A PTAP/PSAP motif motif is present at residues 95 to 98 (PSAP).

It belongs to the hepevirus ORF3 protein family. Forms homooligomers. Interacts with host SRC, HCK, FYN, PIK3R3 and GRB2 (via SH3 domain); binding does not activate the kinases. Interacts with host AMBP/bikunin and AMBP/alpha-1-microglobulin peptides. Interacts with host HPX/hemopexin. Interacts (when phosphorylated) with capsid protein ORF2. Interacts with host TSG101; this interaction plays a role in viral release from the host cell. Interacts with host SIRPA; this interaction down-regulates the phosphorylation of host IRF3. Palmitoylated in the N-terminus.

The protein localises to the host endoplasmic reticulum membrane. It localises to the host cytoplasm. It is found in the host cytoskeleton. Its subcellular location is the virion. The protein resides in the host cell membrane. Small multifunctional phosphoprotein involved in virion morphogenesis, egress and counteracting host innate immunity. Plays critical roles in the final steps of viral release by interacting with host TSG101, a member of the vacuolar protein-sorting pathway and using other cellular host proteins involved in vesicle formation pathway. Also acts as a viroporin and forms ion conductive pores allowing viral particle release. Impairs the generation of type I interferon by down-regulating host TLR3 and TLR7 as well as their downstream signaling pathways. Down-regulates the phosphorylation of host IRF3 via the interaction with host SIRP-alpha, thereby inhibiting IFN-I expression. Interacts with host microtubules. This is Protein ORF3 from Hepatitis E virus genotype 3 (isolate Human/United States/US2) (HEV-3).